A 641-amino-acid chain; its full sequence is MSSKGLKPQKSTKRKDTDSSAKFDSLKSKKPKLVSGEQQQHVKPKFGKPKSAGDKEQSTNLSKKERRVQAKELTEARKKKRKPHYNLEQELVSLWEKMRRRNIGKEDRSKLISEAIRKMKGKVPEIAVSHVSSRVLQTCVKFCSQAEKDVLFTELQPQFLNLASNKYAVHFIQKMLDGASKQQLAACISSLRGHVAPLLRHVFGSLVVEHAYHLGSAAQKQELLAELYSTELQLFKGLTTSNEKTVVDIIAKLGLQKGAVNRHMTAIIQPILEKGIVDHTITHKLLIEYLTIADKTSAADVLQLLTGSLLLRMVHTRDGSRLAMLSIKHGSAKERKKIIKAMKEHVKKMAFDQFGSMVLACIFSIVDDTKLVTKIIVRELEATLKDLVMDKNGRRPLLQLLHPNSSRYLSHDDLAALDLSVPSLCSMDKSETSSKTKDTDGNEIGEETKDEQEDTVAEHSDHEENVTAMGGKKDPLVRRQELLVNSGLAERLIDVCVENAEEFLQSKFGNEVMYEVAIGGSDGILCPSLSEKLCELYEAISSVAAEPKPQESEKDSEHILENFHSSRTIRRLVLNRPGFASILFKKALSGKCRSWAQGHCSKILSAFVETEDVQVREMAKTELQVLVNEGTLKISATKKPE.

Residues 1–82 (MSSKGLKPQK…LTEARKKKRK (82 aa)) form a disordered region. The 396-residue stretch at 9 to 404 (QKSTKRKDTD…RPLLQLLHPN (396 aa)) folds into the PUM-HD domain. 2 stretches are compositionally biased toward basic and acidic residues: residues 14-27 (RKDT…DSLK) and 67-76 (RVQAKELTEA). 5 Pumilio repeats span residues 118–153 (KMKG…VLFT), 154–189 (ELQP…ACIS), 190–225 (SLRG…ELLA), 303–340 (QLLT…KIIK), and 341–378 (AMKE…IIVR). Positions 427–468 (MDKSETSSKTKDTDGNEIGEETKDEQEDTVAEHSDHEENVTA) are disordered. Over residues 428–440 (DKSETSSKTKDTD) the composition is skewed to basic and acidic residues. The span at 441–455 (GNEIGEETKDEQEDT) shows a compositional bias: acidic residues. Positions 456 to 468 (VAEHSDHEENVTA) are enriched in basic and acidic residues.

The protein resides in the nucleus. The protein localises to the nucleolus. In terms of biological role, sequence-specific RNA-binding protein that regulates translation and mRNA stability by binding the 3'-UTR of target mRNAs. The chain is Pumilio homolog 24 (APUM24) from Arabidopsis thaliana (Mouse-ear cress).